A 334-amino-acid chain; its full sequence is Terpene synthase 1 (334 aa).

Mg(2+)-binding residues include Asp-82 and Asp-86. The short motif at 82-86 is the D(D/E)XX(D/E) motif element; the sequence is DDIFD. Arg-184 is a binding site for substrate. Mg(2+) contacts are provided by Asn-230, Ser-234, and Glu-238. The NSE motif motif lies at 230–238; the sequence is NDIYSYHRE. The WxxxxxRY motif motif lies at 309–316; that stretch reads WSESCTRY.

It belongs to the terpene synthase family. Mg(2+) is required as a cofactor.

It carries out the reaction (2E,6E)-farnesyl diphosphate = gamma-muurolene + diphosphate. The catalysed reaction is (2E,6E)-farnesyl diphosphate = alpha-muurolene + diphosphate. The enzyme catalyses (2E,6E)-farnesyl diphosphate = (-)-(E)-beta-caryophyllene + diphosphate. It catalyses the reaction (2E)-geranyl diphosphate = beta-myrcene + diphosphate. Its function is as follows. Terpene synthase that catalyzes the cyclization of farnesyl diphosphate (FPP) into a mixture of sesquiterpenes with gamma-muurolene as the most abundant compound and (-)-beta-caryophyllene, alpha-muurolene, and 4 unidentified sesquiterpenes as minor compoundss. TPS1 also shows monoterpene synthase activity and can also use geranyl diphosphate (GPP) as a substrate to convert it into a mixture of cyclic and acyclic monoterpenes, including myrcene and linalool. P.polycephalum has a unique biology and these volatile terpenoids could function in internal communication of P.polycephalum, to mark the territory that have been explored, or they may be involved in chemotaxis. This Physarum polycephalum (Slime mold) protein is Terpene synthase 1.